The chain runs to 249 residues: Indole-3-glycerol phosphate synthase (249 aa).

The protein belongs to the TrpC family.

It catalyses the reaction 1-(2-carboxyphenylamino)-1-deoxy-D-ribulose 5-phosphate + H(+) = (1S,2R)-1-C-(indol-3-yl)glycerol 3-phosphate + CO2 + H2O. Its pathway is amino-acid biosynthesis; L-tryptophan biosynthesis; L-tryptophan from chorismate: step 4/5. In Pyrobaculum neutrophilum (strain DSM 2338 / JCM 9278 / NBRC 100436 / V24Sta) (Thermoproteus neutrophilus), this protein is Indole-3-glycerol phosphate synthase.